The sequence spans 4753 residues: Dynein heavy chain domain-containing protein 1 (4753 aa).

2 coiled-coil regions span residues 826–858 (IHAIAQCTQKLNEANEQYVELEERMEYVRALHE) and 936–991 (KLQQ…LSEL). A disordered region spans residues 2688–2766 (HLGKDHQESE…SRGMKESISH (79 aa)). Positions 2695–2712 (ESEEEEEEERVPEVESEG) are enriched in acidic residues. The segment covering 2740-2751 (RVSNSRDPSLTP) has biased composition (polar residues). 3 coiled-coil regions span residues 3125–3227 (LQQQ…MSKA), 3590–3651 (MRNQ…QGSK), and 4431–4460 (GAQLAERRLRQRLVQVNRRLESLQDLLTHV). The disordered stretch occupies residues 3580 to 3657 (ALTEGRGKGL…QGSKPAYETQ (78 aa)). A compositionally biased stretch (acidic residues) spans 3602–3615 (KEEDDESEESNEAE). Residues 3616–3631 (DQTKEQKAEERKNEQE) show a composition bias toward basic and acidic residues. Residues 3632-3641 (KEQEENEEKE) are compositionally biased toward acidic residues. The interval 4669–4697 (ALQDSPSSQPSPLPPVSISTQAPGTSDLP) is disordered.

Belongs to the dynein heavy chain family. In terms of tissue distribution, expressed in spermatozoa (at protein level).

It is found in the cell projection. The protein resides in the cilium. It localises to the flagellum. Essential for the normal assembly and function of sperm flagella axonemes. The polypeptide is Dynein heavy chain domain-containing protein 1 (DNHD1) (Homo sapiens (Human)).